The following is a 427-amino-acid chain: Arginine biosynthesis bifunctional protein ArgJ (427 aa).

Residues threonine 174, lysine 200, threonine 211, glutamate 291, asparagine 422, and threonine 427 each coordinate substrate. The active-site Nucleophile is the threonine 211.

It belongs to the ArgJ family. Heterotetramer of two alpha and two beta chains.

The protein resides in the cytoplasm. The catalysed reaction is N(2)-acetyl-L-ornithine + L-glutamate = N-acetyl-L-glutamate + L-ornithine. The enzyme catalyses L-glutamate + acetyl-CoA = N-acetyl-L-glutamate + CoA + H(+). The protein operates within amino-acid biosynthesis; L-arginine biosynthesis; L-ornithine and N-acetyl-L-glutamate from L-glutamate and N(2)-acetyl-L-ornithine (cyclic): step 1/1. Its pathway is amino-acid biosynthesis; L-arginine biosynthesis; N(2)-acetyl-L-ornithine from L-glutamate: step 1/4. Its function is as follows. Catalyzes two activities which are involved in the cyclic version of arginine biosynthesis: the synthesis of N-acetylglutamate from glutamate and acetyl-CoA as the acetyl donor, and of ornithine by transacetylation between N(2)-acetylornithine and glutamate. In Prochlorococcus marinus (strain MIT 9313), this protein is Arginine biosynthesis bifunctional protein ArgJ.